Consider the following 357-residue polypeptide: bZIP transcription factor 23 (357 aa).

The segment at 166–185 (PPVPPAPTPTAAAVPPPPPP) is disordered. The region spanning 275–338 (VERRQRRMIK…KNEVLERMSR (64 aa)) is the bZIP domain. The basic motif stretch occupies residues 277–296 (RRQRRMIKNRESAARSRQRK). A leucine-zipper region spans residues 303 to 317 (LEAEVAKLKELNDEL).

Belongs to the bZIP family. ABI5 subfamily. Highly expressed in leaves.

The protein localises to the nucleus. Its function is as follows. Transcriptional activator that mediates abscisic acid (ABA) signaling. Can regulate the expression of a wide spectrum of stress-related genes in response to abiotic stresses through an ABA-dependent regulation pathway. Confers ABA-dependent drought and salinity tolerance. Binds specifically to the ABA-responsive elements (ABRE) in the promoter of target genes to mediate stress-responsive ABA signaling. This chain is bZIP transcription factor 23, found in Oryza sativa subsp. japonica (Rice).